We begin with the raw amino-acid sequence, 351 residues long: Porphobilinogen deaminase (351 aa).

S-(dipyrrolylmethanemethyl)cysteine is present on cysteine 242.

The protein belongs to the HMBS family. As to quaternary structure, monomer. It depends on dipyrromethane as a cofactor.

It carries out the reaction 4 porphobilinogen + H2O = hydroxymethylbilane + 4 NH4(+). Its pathway is porphyrin-containing compound metabolism; protoporphyrin-IX biosynthesis; coproporphyrinogen-III from 5-aminolevulinate: step 2/4. Functionally, tetrapolymerization of the monopyrrole PBG into the hydroxymethylbilane pre-uroporphyrinogen in several discrete steps. The polypeptide is Porphobilinogen deaminase (Rickettsia africae (strain ESF-5)).